Reading from the N-terminus, the 836-residue chain is Protein translocase subunit SecA (836 aa).

ATP contacts are provided by residues Gln85, 103-107 (GEGKT), and Asp492. Zn(2+) is bound by residues Cys820, Cys822, Cys831, and Cys832.

Belongs to the SecA family. As to quaternary structure, monomer and homodimer. Part of the essential Sec protein translocation apparatus which comprises SecA, SecYEG and auxiliary proteins SecDF. Other proteins may also be involved. Zn(2+) is required as a cofactor.

The protein localises to the cell membrane. It localises to the cytoplasm. The catalysed reaction is ATP + H2O + cellular proteinSide 1 = ADP + phosphate + cellular proteinSide 2.. In terms of biological role, part of the Sec protein translocase complex. Interacts with the SecYEG preprotein conducting channel. Has a central role in coupling the hydrolysis of ATP to the transfer of proteins into and across the cell membrane, serving as an ATP-driven molecular motor driving the stepwise translocation of polypeptide chains across the membrane. The protein is Protein translocase subunit SecA of Clostridium botulinum (strain Eklund 17B / Type B).